Reading from the N-terminus, the 170-residue chain is Flavodoxin (170 aa).

A Flavodoxin-like domain is found at 4-165 (IGLFFGTQTG…RIQAWVAQLK (162 aa)).

It belongs to the flavodoxin family. Requires FMN as cofactor.

Low-potential electron donor to a number of redox enzymes. This Picosynechococcus sp. (strain ATCC 27264 / PCC 7002 / PR-6) (Agmenellum quadruplicatum) protein is Flavodoxin (isiB).